The chain runs to 470 residues: E3 ubiquitin-protein ligase TRAIP (470 aa).

An RING-type; atypical zinc finger spans residues 7–50 (CTICSDFFDHSRDVAAIHCGHTFHLQCLIQWFETAPSRTCPQCR). A coiled-coil region spans residues 76–277 (AEFLKNELDS…RKKLMILQGT (202 aa)). The interaction with CYLD stretch occupies residues 211-470 (LKEARKATGE…QPKLDTFLCQ (260 aa)). Residues 461 to 470 (QPKLDTFLCQ) carry the PIP-box motif.

The protein belongs to the TRAIP family. Interacts (via PIP-box) with PCNA. Binds TRAF1, TRAF2, TRAF3, TRAF5 and TRAF6 is part of the receptor-TRAF signaling complex. May interact with CYLD; the C-terminus interacts with CYLD, however the interaction was not detected with the full-length protein. Interacts with POLK and POLN. Interacts with UIMC1. Post-translationally, autoubiquitinated. In terms of processing, sumoylated; sumoylation is required for nuclear localization. Sumoylation increases protein stability, possibly by preventing ubiquitination. As to expression, detected in testis and thymus, and at lower levels in spleen.

It localises to the nucleus. Its subcellular location is the nucleoplasm. The protein resides in the nucleolus. The protein localises to the chromosome. It is found in the cytoplasm. It localises to the perinuclear region. It carries out the reaction S-ubiquitinyl-[E2 ubiquitin-conjugating enzyme]-L-cysteine + [acceptor protein]-L-lysine = [E2 ubiquitin-conjugating enzyme]-L-cysteine + N(6)-ubiquitinyl-[acceptor protein]-L-lysine.. Its pathway is protein modification; protein ubiquitination. In terms of biological role, E3 ubiquitin ligase required to protect genome stability in response to replication stress. Acts as a key regulator of interstrand cross-link repair, which takes place when both strands of duplex DNA are covalently tethered together, thereby blocking replication and transcription. During mitosis, controls the choice between the two pathways of replication-coupled interstrand-cross-link repair by mediating ubiquitination of MCM7 subunit of the CMG helicase complex. Short ubiquitin chains on MCM7 promote recruitment of DNA glycosylase NEIL3. If the interstrand cross-link cannot be cleaved by NEIL3, the ubiquitin chains continue to grow on MCM7, promoting the unloading of the CMG helicase complex by the VCP/p97 ATPase, enabling the Fanconi anemia DNA repair pathway. Only catalyzes ubiquitination of MCM7 when forks converge. Also involved in the repair of covalent DNA-protein cross-links (DPCs) during DNA synthesis: promotes ubiquitination of DPCs, leading to their degradation by the proteasome. Has also been proposed to play a role in promoting translesion synthesis by mediating the assembly of 'Lys-63'-linked poly-ubiquitin chains on the Y-family polymerase POLN in order to facilitate bypass of DNA lesions and preserve genomic integrity. The function in translesion synthesis is however controversial. Acts as a regulator of the spindle assembly checkpoint. Also acts as a negative regulator of innate immune signaling by inhibiting activation of NF-kappa-B mediated by TNF. Negatively regulates TLR3/4- and RIG-I-mediated IRF3 activation and subsequent IFNB1 production and cellular antiviral response by promoting 'Lys-48'-linked polyubiquitination of TNK1 leading to its proteasomal degradation. The chain is E3 ubiquitin-protein ligase TRAIP from Mus musculus (Mouse).